The chain runs to 224 residues: Ribosomal RNA large subunit methyltransferase E (224 aa).

Gly-64, Trp-66, Asp-97, Asp-113, and Asp-138 together coordinate S-adenosyl-L-methionine. Residue Lys-178 is the Proton acceptor of the active site.

This sequence belongs to the class I-like SAM-binding methyltransferase superfamily. RNA methyltransferase RlmE family.

The protein localises to the cytoplasm. The catalysed reaction is uridine(2552) in 23S rRNA + S-adenosyl-L-methionine = 2'-O-methyluridine(2552) in 23S rRNA + S-adenosyl-L-homocysteine + H(+). Functionally, specifically methylates the uridine in position 2552 of 23S rRNA at the 2'-O position of the ribose in the fully assembled 50S ribosomal subunit. The chain is Ribosomal RNA large subunit methyltransferase E from Methylibium petroleiphilum (strain ATCC BAA-1232 / LMG 22953 / PM1).